We begin with the raw amino-acid sequence, 366 residues long: tRNA/tmRNA (uracil-C(5))-methyltransferase (366 aa).

Positions 189, 217, 222, 238, and 298 each coordinate S-adenosyl-L-methionine. The active-site Nucleophile is Cys323. Glu357 functions as the Proton acceptor in the catalytic mechanism.

Belongs to the class I-like SAM-binding methyltransferase superfamily. RNA M5U methyltransferase family. TrmA subfamily.

It carries out the reaction uridine(54) in tRNA + S-adenosyl-L-methionine = 5-methyluridine(54) in tRNA + S-adenosyl-L-homocysteine + H(+). The catalysed reaction is uridine(341) in tmRNA + S-adenosyl-L-methionine = 5-methyluridine(341) in tmRNA + S-adenosyl-L-homocysteine + H(+). Dual-specificity methyltransferase that catalyzes the formation of 5-methyluridine at position 54 (m5U54) in all tRNAs, and that of position 341 (m5U341) in tmRNA (transfer-mRNA). The polypeptide is tRNA/tmRNA (uracil-C(5))-methyltransferase (Photorhabdus laumondii subsp. laumondii (strain DSM 15139 / CIP 105565 / TT01) (Photorhabdus luminescens subsp. laumondii)).